The following is a 180-amino-acid chain: Major urinary protein 5 (180 aa).

An N-terminal signal peptide occupies residues 1–18 (MKLLLLLCLELTLVYVHA). An intrachain disulfide couples C82 to C175.

Belongs to the calycin superfamily. Lipocalin family.

It is found in the secreted. In terms of biological role, major urinary proteins (Mups) bind pheromones, and thus stabilize them to allow slow release into the air from urine marks. May protect pheromones from oxidation. May also act as pheromones themselves. In this context, they play a role in the regulation of social behaviors, such as aggression, mating, pup-suckling, territory establishment and dominance. The protein is Major urinary protein 5 of Mus musculus (Mouse).